The sequence spans 210 residues: Probable GTP-binding protein EngB (210 aa).

The region spanning 25–199 (CGIEVAFAGR…RQKLDSWFSE (175 aa)) is the EngB-type G domain. Residues 33-40 (GRSNAGKS), 60-64 (GRTQL), 78-81 (DLPG), 145-148 (TKAD), and 178-180 (FSS) each bind GTP. Mg(2+)-binding residues include serine 40 and threonine 62.

The protein belongs to the TRAFAC class TrmE-Era-EngA-EngB-Septin-like GTPase superfamily. EngB GTPase family. Mg(2+) serves as cofactor.

Functionally, necessary for normal cell division and for the maintenance of normal septation. The protein is Probable GTP-binding protein EngB of Salmonella agona (strain SL483).